Reading from the N-terminus, the 159-residue chain is 6,7-dimethyl-8-ribityllumazine synthase (159 aa).

5-amino-6-(D-ribitylamino)uracil is bound by residues phenylalanine 23, serine 61–glutamate 63, and alanine 85–isoleucine 87. Residue aspartate 90–threonine 91 coordinates (2S)-2-hydroxy-3-oxobutyl phosphate. Histidine 93 (proton donor) is an active-site residue. Phenylalanine 118 is a 5-amino-6-(D-ribitylamino)uracil binding site. Residue arginine 132 participates in (2S)-2-hydroxy-3-oxobutyl phosphate binding.

It belongs to the DMRL synthase family.

It catalyses the reaction (2S)-2-hydroxy-3-oxobutyl phosphate + 5-amino-6-(D-ribitylamino)uracil = 6,7-dimethyl-8-(1-D-ribityl)lumazine + phosphate + 2 H2O + H(+). Its pathway is cofactor biosynthesis; riboflavin biosynthesis; riboflavin from 2-hydroxy-3-oxobutyl phosphate and 5-amino-6-(D-ribitylamino)uracil: step 1/2. In terms of biological role, catalyzes the formation of 6,7-dimethyl-8-ribityllumazine by condensation of 5-amino-6-(D-ribitylamino)uracil with 3,4-dihydroxy-2-butanone 4-phosphate. This is the penultimate step in the biosynthesis of riboflavin. This is 6,7-dimethyl-8-ribityllumazine synthase from Synechococcus sp. (strain RCC307).